The chain runs to 228 residues: Homeobox-leucine zipper protein ATHB-53 (228 aa).

The tract at residues 36–62 (DGGEESKPVKRRRKRRSKGSSATNEED) is disordered. Positions 44–53 (VKRRRKRRSK) are enriched in basic residues. The segment at residues 68–127 (GMLRKRKLTDEQVNMLEYSFGNEHKLESGRKEKIAGELGLDPRQVAVWFQNRRARWKNKK) is a DNA-binding region (homeobox). The segment at 128 to 156 (LEEEYAKLKNHHDNVVLGQCQLESQILKL) is leucine-zipper.

Belongs to the HD-ZIP homeobox family. Class I subfamily. In terms of tissue distribution, expressed in root meristem, late flowers and siliques.

It is found in the nucleus. In terms of biological role, probable transcription factor that may play a regulatory role in auxin/cytokinin signaling during root development. The protein is Homeobox-leucine zipper protein ATHB-53 (ATHB-53) of Arabidopsis thaliana (Mouse-ear cress).